We begin with the raw amino-acid sequence, 340 residues long: Ferrochelatase (340 aa).

Positions 189 and 292 each coordinate Fe cation.

The protein belongs to the ferrochelatase family.

It is found in the cytoplasm. The enzyme catalyses heme b + 2 H(+) = protoporphyrin IX + Fe(2+). It participates in porphyrin-containing compound metabolism; protoheme biosynthesis; protoheme from protoporphyrin-IX: step 1/1. Catalyzes the ferrous insertion into protoporphyrin IX. The chain is Ferrochelatase from Pseudomonas syringae pv. syringae (strain B728a).